Reading from the N-terminus, the 358-residue chain is Probable BOI-related E3 ubiquitin-protein ligase 2 (358 aa).

The stretch at 171–234 (KYEIEEKRKR…NQIWRDLAQT (64 aa)) forms a coiled coil. Residues 214 to 250 (LEERVKSLSIENQIWRDLAQTNEATANHLRTNLEHVL) form a WRD domain region. An RING-type zinc finger spans residues 310–345 (CRNCGEEESCVLLLPCRHLCLCGVCGSSVHTCPICT).

Interacts with the DELLA proteins GAI, RGA, RGL1, RGL2 and RGL3.

It carries out the reaction S-ubiquitinyl-[E2 ubiquitin-conjugating enzyme]-L-cysteine + [acceptor protein]-L-lysine = [E2 ubiquitin-conjugating enzyme]-L-cysteine + N(6)-ubiquitinyl-[acceptor protein]-L-lysine.. The protein operates within protein degradation; proteasomal ubiquitin-dependent pathway. In terms of biological role, probable E3 ubiquitin-protein ligase. Has no effect on the stability of the DELLA proteins. In Arabidopsis thaliana (Mouse-ear cress), this protein is Probable BOI-related E3 ubiquitin-protein ligase 2 (BRG2).